A 190-amino-acid polypeptide reads, in one-letter code: Potassium-transporting ATPase KdpC subunit (190 aa).

Residues 10–30 (VLFAVLTLICGVIYPYAITGI) traverse the membrane as a helical segment.

The protein belongs to the KdpC family. The system is composed of three essential subunits: KdpA, KdpB and KdpC.

Its subcellular location is the cell inner membrane. In terms of biological role, part of the high-affinity ATP-driven potassium transport (or Kdp) system, which catalyzes the hydrolysis of ATP coupled with the electrogenic transport of potassium into the cytoplasm. This subunit acts as a catalytic chaperone that increases the ATP-binding affinity of the ATP-hydrolyzing subunit KdpB by the formation of a transient KdpB/KdpC/ATP ternary complex. This Herminiimonas arsenicoxydans protein is Potassium-transporting ATPase KdpC subunit.